Reading from the N-terminus, the 321-residue chain is uncharacterized protein (321 aa).

This is an uncharacterized protein from Acanthamoeba polyphaga (Amoeba).